We begin with the raw amino-acid sequence, 482 residues long: 7-deoxyloganetic acid glucosyl transferase (482 aa).

Catalysis depends on His22, which acts as the Proton acceptor. An an anthocyanidin-binding site is contributed by His22. Asp127 serves as the catalytic Charge relay. UDP-alpha-D-glucose is bound by residues Thr149, Ala362, Gln364, His379, Trp382, Asn383, Ser384, and Glu387. Ala402 contacts an anthocyanidin. Residues Asp403 and Gln404 each contribute to the UDP-alpha-D-glucose site.

This sequence belongs to the UDP-glycosyltransferase family. Expressed in the leaf internal phloem-associated parenchyma (IPAP) inside the mesophyll. Mostly observed in leaves, roots and stems, and, to a lower extent, in flowers.

Its subcellular location is the nucleus. The protein localises to the cytoplasm. It is found in the cytosol. It catalyses the reaction 7-deoxyloganetate + UDP-alpha-D-glucose = 7-deoxyloganate + UDP + H(+). The protein operates within alkaloid biosynthesis. Component of the seco-iridoid and derivatives monoterpenoid indole alkaloids (MIAs, e.g. vincristine, quinine, and strychnine) biosynthesis pathway. Catalyzes the glucosylation of 7-deoxyloganetic acid to form 7-deoxyloganic acid using UDP-glucose as the sugar donor. Inactive with loganetic acid, loganetin, iridodial, iridotrial, 8-OH-geraniol, jasmonic acid, gibberellic acid, indole acetic acid, salicylic acid, abscisic acid, zeatin and luteolin. In Catharanthus roseus (Madagascar periwinkle), this protein is 7-deoxyloganetic acid glucosyl transferase.